Here is a 139-residue protein sequence, read N- to C-terminus: Inactive palmitoleoyl-protein carboxylesterase notum1b (139 aa).

Belongs to the pectinacetylesterase family. Notum subfamily.

Functionally, probable inactive palmitoleoyl-protein carboxylesterase. The protein is Inactive palmitoleoyl-protein carboxylesterase notum1b of Danio rerio (Zebrafish).